A 620-amino-acid polypeptide reads, in one-letter code: MATREHELRPEQERLGEDREEYEDGEEEEEEGEEGWDDWESDGDDAGGGGGGGGLLCLFCSARFDSESSLFSHCASEHRFDFYRVVKETGMDFYGCIKLINFVRSKVAENKCWSCGQVFSSNSELCGHLHALEIPQLEGKVPWGDDVYLKPFLEDDSLLHSLSVFDDDDEDDCGMPMEKGGCSAGNGSLAETCESNLKSIINDGSDVIDRFERTCTIESTDGECSGSLAQEPSDKQLKIARASAAARGIKSVDESYFGSYSSFGIHREMLGDKVRTEAYRDALLGNPSLMNGATVLDVGCGTGILSLFAAKAGASRVIAVDGSAKMVSVATEVAKSNGFLYDENMEMQQKRDTQVITVVHTKAEELNHKIQVPSNKFDVLVSEWMGYCLLYESMLSSVLYARDHFLKPGGAILPDTATIFGAGFGKGGTSLPFWENVYGFDMSCIGKEVTGNSARFPVVDILASEDIVTETAVLNSFDLATMKENEMDFTSSFELRLSESGVSQSGVTWCYGIILWFDTGFTNRFCKEKPVNLSTSPFSTPTHWSQTIFTFEEPIAMAKEESAVVSSASVGTDECPAVMIRSRISIVRASEHRSIDISIETTGISSDGRKRSWPVQIFNL.

Residues 1 to 17 (MATREHELRPEQERLGE) show a composition bias toward basic and acidic residues. The interval 1-45 (MATREHELRPEQERLGEDREEYEDGEEEEEEGEEGWDDWESDGDD) is disordered. Acidic residues predominate over residues 18–45 (DREEYEDGEEEEEEGEEGWDDWESDGDD). The segment at 55–78 (LLCLFCSARFDSESSLFSHCASEH) adopts a C2H2-type 1 zinc-finger fold. The C2H2-type 2; degenerate zinc-finger motif lies at 110–137 (NKCWSCGQVFSSNSELCGHLHALEIPQL). The region spanning 253–582 (DESYFGSYSS…DECPAVMIRS (330 aa)) is the SAM-dependent MTase PRMT-type domain. The S-adenosyl-L-homocysteine site is built by Arg-275, Gly-299, Asp-321, Ser-323, and Glu-364. Residues Glu-383 and Glu-392 contribute to the active site.

This sequence belongs to the class I-like SAM-binding methyltransferase superfamily. Protein arginine N-methyltransferase family.

The protein resides in the cytoplasm. The protein localises to the cytosol. The enzyme catalyses L-arginyl-[protein] + S-adenosyl-L-methionine = N(omega)-methyl-L-arginyl-[protein] + S-adenosyl-L-homocysteine + H(+). The catalysed reaction is L-arginyl-[protein] + 2 S-adenosyl-L-methionine = N(omega),N(omega)-dimethyl-L-arginyl-[protein] + 2 S-adenosyl-L-homocysteine + 2 H(+). Functionally, protein-arginine N-methyltransferase that catalyzes both the monomethylation and asymmetric dimethylation of the guanidino nitrogens of arginine residues in target proteins, and therefore falls into the group of type I methyltransferases. This is Probable protein arginine N-methyltransferase 3 (PRMT3) from Oryza sativa subsp. japonica (Rice).